The primary structure comprises 435 residues: Citrate synthase (435 aa).

Residues His-311 and Asp-370 contribute to the active site.

The protein belongs to the citrate synthase family.

The enzyme catalyses oxaloacetate + acetyl-CoA + H2O = citrate + CoA + H(+). Its pathway is carbohydrate metabolism; tricarboxylic acid cycle; isocitrate from oxaloacetate: step 1/2. This Rickettsia slovaca (strain 13-B) protein is Citrate synthase (gltA).